Reading from the N-terminus, the 892-residue chain is Translation initiation factor IF-2 (892 aa).

Residues 65 to 296 form a disordered region; it reads KTRSTLNIPS…KGKRKPSTLQ (232 aa). Positions 68–82 are enriched in polar residues; sequence STLNIPSTGGKSKSV. The span at 99-217 shows a compositional bias: basic and acidic residues; the sequence is EQAKAEEQAQ…KMAAENEGKW (119 aa). The span at 224-237 shows a compositional bias: polar residues; the sequence is QTESADYHVTTSQH. Basic and acidic residues predominate over residues 239–254; sequence RAAEDENDAKVEGDRR. The span at 255-269 shows a compositional bias: basic residues; the sequence is SRTRGGKATKQKKGN. Positions 270-283 are enriched in basic and acidic residues; that stretch reads KLSESKADREEARA. The tr-type G domain occupies 391–560; sequence HRAPVVTIMG…LLQAEVLELK (170 aa). Residues 400 to 407 form a G1 region; that stretch reads GHVDHGKT. 400 to 407 contacts GTP; it reads GHVDHGKT. The G2 stretch occupies residues 425–429; that stretch reads GITQH. Residues 446–449 form a G3 region; sequence DTPG. Residues 446–450 and 500–503 each bind GTP; these read DTPGH and NKID. The tract at residues 500–503 is G4; it reads NKID. The interval 536–538 is G5; it reads SAK.

This sequence belongs to the TRAFAC class translation factor GTPase superfamily. Classic translation factor GTPase family. IF-2 subfamily.

Its subcellular location is the cytoplasm. Its function is as follows. One of the essential components for the initiation of protein synthesis. Protects formylmethionyl-tRNA from spontaneous hydrolysis and promotes its binding to the 30S ribosomal subunits. Also involved in the hydrolysis of GTP during the formation of the 70S ribosomal complex. This Yersinia pseudotuberculosis serotype O:1b (strain IP 31758) protein is Translation initiation factor IF-2.